We begin with the raw amino-acid sequence, 295 residues long: UDP-N-acetylenolpyruvoylglucosamine reductase (295 aa).

Residues lysine 24–glycine 188 form the FAD-binding PCMH-type domain. The active site involves arginine 168. Serine 217 functions as the Proton donor in the catalytic mechanism. The active site involves glutamate 287.

The protein belongs to the MurB family. Requires FAD as cofactor.

It is found in the cytoplasm. It catalyses the reaction UDP-N-acetyl-alpha-D-muramate + NADP(+) = UDP-N-acetyl-3-O-(1-carboxyvinyl)-alpha-D-glucosamine + NADPH + H(+). It participates in cell wall biogenesis; peptidoglycan biosynthesis. Cell wall formation. This Rickettsia peacockii (strain Rustic) protein is UDP-N-acetylenolpyruvoylglucosamine reductase.